The sequence spans 763 residues: Phosphoglycerol transferase I (763 aa).

4 helical membrane-spanning segments follow: residues 1 to 21 (MSEL…AWKA), 26 to 46 (WWFA…ITLF), 77 to 97 (ILPG…LGWI), and 108 to 128 (FGYS…SPAF).

Belongs to the OpgB family.

It localises to the cell inner membrane. The enzyme catalyses a phosphatidylglycerol + a membrane-derived-oligosaccharide D-glucose = a 1,2-diacyl-sn-glycerol + a membrane-derived-oligosaccharide 6-(glycerophospho)-D-glucose.. Its pathway is glycan metabolism; osmoregulated periplasmic glucan (OPG) biosynthesis. In terms of biological role, transfers a phosphoglycerol residue from phosphatidylglycerol to the membrane-bound nascent glucan backbones. In Escherichia coli O139:H28 (strain E24377A / ETEC), this protein is Phosphoglycerol transferase I.